The sequence spans 492 residues: MAQKTLLIITDGIGYRKDSDYNAFFHAKKPTYDLMFKTLPYSLIDTHGLSVGLPKGQMGNSEVGHMCIGAGRVLYQDLVKISLSLQNDGLKNNTAFLSAIQKSSVVHLMGLMSDGGVHSHIEHFIALALECEKFHKKVYLHLITDGRDVAPKSALTYLEIMQNICNESIQIATMSGRFYAMDRDNRFERIKLAYNSLMGLTDPTPLSPSEYIQSQYDKNITDEFIMPTCFKNYCGMQDDESFIFINFRNDRAREITSALGQKEFNGFKRQVFKKLHIATMTPYDKNFPYPILFPKESIQNTLAEVVSECNLTQSHIAETEKYAHVTFFINGGVETPFKNENRVLIQSPKVTTYDLKPEMSAKEVTLAVLEQMRLGTDLIIVNFANGDMVGHTGNFEASVKAVEAVDTSLGEILSLAKELNYAMLLTSDHGNCEHMKDENQNPLTNHTAGSVYCFVLGNGIKSIKNGALNNIASSVLKLMGIKAPATMDEPLF.

Mn(2+) contacts are provided by aspartate 11 and serine 61. Serine 61 functions as the Phosphoserine intermediate in the catalytic mechanism. Substrate is bound by residues histidine 118, 147–148 (RD), arginine 177, arginine 183, 248–251 (RNDR), and lysine 321. Positions 387, 391, 428, 429, and 446 each coordinate Mn(2+).

It belongs to the BPG-independent phosphoglycerate mutase family. In terms of assembly, monomer. Mn(2+) serves as cofactor.

It carries out the reaction (2R)-2-phosphoglycerate = (2R)-3-phosphoglycerate. It participates in carbohydrate degradation; glycolysis; pyruvate from D-glyceraldehyde 3-phosphate: step 3/5. Its function is as follows. Catalyzes the interconversion of 2-phosphoglycerate and 3-phosphoglycerate. The sequence is that of 2,3-bisphosphoglycerate-independent phosphoglycerate mutase from Helicobacter acinonychis (strain Sheeba).